Here is a 1368-residue protein sequence, read N- to C-terminus: DNA-directed RNA polymerase subunit beta (1368 aa).

Belongs to the RNA polymerase beta chain family. In terms of assembly, the RNAP catalytic core consists of 2 alpha, 1 beta, 1 beta' and 1 omega subunit. When a sigma factor is associated with the core the holoenzyme is formed, which can initiate transcription.

It catalyses the reaction RNA(n) + a ribonucleoside 5'-triphosphate = RNA(n+1) + diphosphate. Functionally, DNA-dependent RNA polymerase catalyzes the transcription of DNA into RNA using the four ribonucleoside triphosphates as substrates. The chain is DNA-directed RNA polymerase subunit beta from Legionella pneumophila (strain Lens).